The primary structure comprises 477 residues: Aspartyl/glutamyl-tRNA(Asn/Gln) amidotransferase subunit B (477 aa).

This sequence belongs to the GatB/GatE family. GatB subfamily. In terms of assembly, heterotrimer of A, B and C subunits.

The enzyme catalyses L-glutamyl-tRNA(Gln) + L-glutamine + ATP + H2O = L-glutaminyl-tRNA(Gln) + L-glutamate + ADP + phosphate + H(+). The catalysed reaction is L-aspartyl-tRNA(Asn) + L-glutamine + ATP + H2O = L-asparaginyl-tRNA(Asn) + L-glutamate + ADP + phosphate + 2 H(+). Functionally, allows the formation of correctly charged Asn-tRNA(Asn) or Gln-tRNA(Gln) through the transamidation of misacylated Asp-tRNA(Asn) or Glu-tRNA(Gln) in organisms which lack either or both of asparaginyl-tRNA or glutaminyl-tRNA synthetases. The reaction takes place in the presence of glutamine and ATP through an activated phospho-Asp-tRNA(Asn) or phospho-Glu-tRNA(Gln). The chain is Aspartyl/glutamyl-tRNA(Asn/Gln) amidotransferase subunit B from Oenococcus oeni (strain ATCC BAA-331 / PSU-1).